The following is a 154-amino-acid chain: 17.6 kDa class I heat shock protein (154 aa).

The sHSP domain maps to 40–154 (ETSAFANTRI…PDVKSIEISG (115 aa)).

It belongs to the small heat shock protein (HSP20) family. In terms of assembly, forms oligomeric structures.

Its subcellular location is the cytoplasm. The chain is 17.6 kDa class I heat shock protein from Solanum peruvianum (Peruvian tomato).